A 135-amino-acid polypeptide reads, in one-letter code: ATP synthase epsilon chain (135 aa).

The protein belongs to the ATPase epsilon chain family. As to quaternary structure, F-type ATPases have 2 components, CF(1) - the catalytic core - and CF(0) - the membrane proton channel. CF(1) has five subunits: alpha(3), beta(3), gamma(1), delta(1), epsilon(1). CF(0) has three main subunits: a, b and c.

Its subcellular location is the cell inner membrane. Produces ATP from ADP in the presence of a proton gradient across the membrane. In Brucella abortus (strain S19), this protein is ATP synthase epsilon chain.